Here is a 240-residue protein sequence, read N- to C-terminus: Sugar fermentation stimulation protein homolog (240 aa).

Belongs to the SfsA family.

The polypeptide is Sugar fermentation stimulation protein homolog (Methanothermobacter thermautotrophicus (strain ATCC 29096 / DSM 1053 / JCM 10044 / NBRC 100330 / Delta H) (Methanobacterium thermoautotrophicum)).